Consider the following 355-residue polypeptide: Ion-translocating oxidoreductase complex subunit D (355 aa).

Helical transmembrane passes span 23-43 (WVAL…GWGT), 44-64 (LVQL…VMLF), 78-109 (ALVT…IVIA), and 129-149 (VVLL…LPLI). FMN phosphoryl threonine is present on Thr-194. 5 helical membrane passes run 221 to 241 (FAGV…LILL), 250 to 270 (IPVG…LFFP), 273 to 293 (TASP…FFIA), 307 to 327 (ILFG…GGFP), and 328 to 348 (DGVA…DYYT).

This sequence belongs to the NqrB/RnfD family. As to quaternary structure, the complex is composed of six subunits: RnfA, RnfB, RnfC, RnfD, RnfE and RnfG. It depends on FMN as a cofactor.

Its subcellular location is the cell inner membrane. In terms of biological role, part of a membrane-bound complex that couples electron transfer with translocation of ions across the membrane. This is Ion-translocating oxidoreductase complex subunit D from Vibrio vulnificus (strain CMCP6).